The chain runs to 209 residues: PF03932 family protein CutC (209 aa).

This sequence belongs to the CutC family.

It is found in the cytoplasm. Its function is as follows. Might participate in the control of copper homeostasis; data from other bacteria suggests it is not involved. In Enterococcus faecalis (strain ATCC 700802 / V583), this protein is PF03932 family protein CutC.